A 162-amino-acid polypeptide reads, in one-letter code: V-type proton ATPase subunit c' (162 aa).

Topologically, residues 1-11 (MSSNLCPIYSS) are lumenal. The chain crosses the membrane as a helical span at residues 12–32 (FFGFAGVCASMVFSCLGAGYG). Residues 33 to 54 (TALAGRGIAAVGAFRPEIVMKS) are Cytoplasmic-facing. The helical transmembrane segment at 55 to 75 (LIPVVMSGIIGVYGLVMSVLI) threads the bilayer. The Lumenal portion of the chain corresponds to 76 to 93 (AGDMSPDNDYSLFSGFIH). The chain crosses the membrane as a helical span at residues 94–114 (LSAGLAVGLTGVAAGYAIGVV). Residues 115 to 132 (GDRGVQSFMRQDRIFVSM) lie on the Cytoplasmic side of the membrane. The helical transmembrane segment at 133–153 (VLILIFAEVLGLYGLIVGLIL) threads the bilayer. The Lumenal segment spans residues 154-162 (QTKTSNVCY).

This sequence belongs to the V-ATPase proteolipid subunit family. In terms of assembly, V-ATPase is a heteromultimeric enzyme composed of a peripheral catalytic V1 complex (components A to H) attached to an integral membrane V0 proton pore complex (components: a, c, c', c'', d, e, f and VOA1). The decameric c-ring forms the proton-conducting pore, and is composed of eight proteolipid subunits c, one subunit c' and one subunit c''.

The protein localises to the vacuole membrane. In terms of biological role, proton-conducting pore forming subunit of the V0 complex of vacuolar(H+)-ATPase (V-ATPase), a multisubunit enzyme composed of a peripheral complex (V1) that hydrolyzes ATP and a membrane integral complex (V0) that translocates protons. V-ATPase is responsible for acidifying and maintaining the pH of intracellular compartments. The sequence is that of V-type proton ATPase subunit c' from Schizosaccharomyces pombe (strain 972 / ATCC 24843) (Fission yeast).